The following is a 153-amino-acid chain: Probable inactive ribonuclease-like protein 13 (153 aa).

An N-terminal signal peptide occupies residues 1–22 (MASDAASLLVLQLVLQPTLVTG).

This sequence belongs to the pancreatic ribonuclease family.

It localises to the secreted. In terms of biological role, does not exhibit any ribonuclease activity. The chain is Probable inactive ribonuclease-like protein 13 (Rnase13) from Rattus norvegicus (Rat).